The following is a 290-amino-acid chain: HTH-type transcriptional regulator BsdA (290 aa).

The region spanning 1 to 59 is the HTH lysR-type domain; sequence MDIRQLRYFITIAQEQKITSAAKKLHMAQPPLSRQLKQLEDELGVVLFDRNKKKQMTLT. Residues 18-37 constitute a DNA-binding region (H-T-H motif); it reads ITSAAKKLHMAQPPLSRQLK.

The protein belongs to the LysR transcriptional regulatory family.

Functionally, could be a positive regulator of bsdBCD expression in response to salicylic acid. This Bacillus subtilis (strain 168) protein is HTH-type transcriptional regulator BsdA (bsdA).